A 463-amino-acid polypeptide reads, in one-letter code: Chromosomal replication initiator protein DnaA (463 aa).

The domain I, interacts with DnaA modulators stretch occupies residues Met1–Ile84. Positions Ile84–Ser124 are domain II. The interval Thr125 to Ser343 is domain III, AAA+ region. Residues Gly171, Gly173, Lys174, and Thr175 each contribute to the ATP site. The tract at residues Asn344–Asn463 is domain IV, binds dsDNA.

It belongs to the DnaA family. Oligomerizes as a right-handed, spiral filament on DNA at oriC.

The protein resides in the cytoplasm. Plays an essential role in the initiation and regulation of chromosomal replication. ATP-DnaA binds to the origin of replication (oriC) to initiate formation of the DNA replication initiation complex once per cell cycle. Binds the DnaA box (a 9 base pair repeat at the origin) and separates the double-stranded (ds)DNA. Forms a right-handed helical filament on oriC DNA; dsDNA binds to the exterior of the filament while single-stranded (ss)DNA is stabiized in the filament's interior. The ATP-DnaA-oriC complex binds and stabilizes one strand of the AT-rich DNA unwinding element (DUE), permitting loading of DNA polymerase. After initiation quickly degrades to an ADP-DnaA complex that is not apt for DNA replication. Binds acidic phospholipids. This chain is Chromosomal replication initiator protein DnaA, found in Rickettsia bellii (strain OSU 85-389).